The following is a 327-amino-acid chain: tRNA dimethylallyltransferase (327 aa).

Position 14–21 (14–21) interacts with ATP; that stretch reads GPTASGKT. Residue 16-21 participates in substrate binding; that stretch reads TASGKT. 2 interaction with substrate tRNA regions span residues 39–42 and 163–167; these read DSAL and QRIQR.

This sequence belongs to the IPP transferase family. Monomer. Mg(2+) serves as cofactor.

It carries out the reaction adenosine(37) in tRNA + dimethylallyl diphosphate = N(6)-dimethylallyladenosine(37) in tRNA + diphosphate. Catalyzes the transfer of a dimethylallyl group onto the adenine at position 37 in tRNAs that read codons beginning with uridine, leading to the formation of N6-(dimethylallyl)adenosine (i(6)A). In Xanthomonas oryzae pv. oryzae (strain PXO99A), this protein is tRNA dimethylallyltransferase.